A 217-amino-acid chain; its full sequence is Cytidylate kinase (217 aa).

Residue 9 to 17 coordinates ATP; it reads GPSSSGKSS.

The protein belongs to the cytidylate kinase family. Type 1 subfamily.

Its subcellular location is the cytoplasm. It catalyses the reaction CMP + ATP = CDP + ADP. It carries out the reaction dCMP + ATP = dCDP + ADP. The polypeptide is Cytidylate kinase (Mycoplasma genitalium (strain ATCC 33530 / DSM 19775 / NCTC 10195 / G37) (Mycoplasmoides genitalium)).